The primary structure comprises 119 residues: Large ribosomal subunit protein uL22 (119 aa).

It belongs to the universal ribosomal protein uL22 family. As to quaternary structure, part of the 50S ribosomal subunit.

Functionally, this protein binds specifically to 23S rRNA; its binding is stimulated by other ribosomal proteins, e.g. L4, L17, and L20. It is important during the early stages of 50S assembly. It makes multiple contacts with different domains of the 23S rRNA in the assembled 50S subunit and ribosome. The globular domain of the protein is located near the polypeptide exit tunnel on the outside of the subunit, while an extended beta-hairpin is found that lines the wall of the exit tunnel in the center of the 70S ribosome. The polypeptide is Large ribosomal subunit protein uL22 (Pelodictyon phaeoclathratiforme (strain DSM 5477 / BU-1)).